The sequence spans 746 residues: Zinc finger protein 366 (746 aa).

The tract at residues Met-1–Leu-64 is disordered. C2H2-type zinc fingers lie at residues Trp-250–His-272, His-278–His-300, His-306–His-328, His-334–His-356, Asn-362–His-384, Tyr-390–His-412, Tyr-418–His-440, His-446–His-468, Tyr-474–His-496, Phe-502–His-524, and Phe-530–His-553. The interval Gly-452–Ile-746 is interaction with NRIP1. A PXDLS motif is present at residues Pro-587–Ser-591. The disordered stretch occupies residues Pro-587–Glu-689. Residues Cys-613 to Tyr-627 show a composition bias toward acidic residues. A compositionally biased stretch (basic and acidic residues) spans Glu-675–Glu-689.

As to quaternary structure, interacts with ESR1 and NRIP1. Interacts (via PXDLS motif) with CTBP1. As to expression, expressed in immature and mature dendritic cells (DCs).

The protein resides in the nucleus. Has transcriptional repression activity. Acts as a corepressor of ESR1; the function seems to involve CTBP1 and histone deacetylases. The polypeptide is Zinc finger protein 366 (Mus musculus (Mouse)).